A 106-amino-acid chain; its full sequence is Putative double-stranded DNA mimic protein VIBHAR_02752 (106 aa).

The protein belongs to the putative dsDNA mimic protein family.

Its function is as follows. May act as a double-stranded DNA (dsDNA) mimic. Probably regulates the activity of a dsDNA-binding protein. This Vibrio campbellii (strain ATCC BAA-1116) protein is Putative double-stranded DNA mimic protein VIBHAR_02752.